Reading from the N-terminus, the 269-residue chain is Ribonuclease HII (269 aa).

The RNase H type-2 domain maps to 83–269 (YLIAGVDEVG…HRMSFLTNIL (187 aa)). Aspartate 89, glutamate 90, and aspartate 185 together coordinate a divalent metal cation.

It belongs to the RNase HII family. Mn(2+) serves as cofactor. It depends on Mg(2+) as a cofactor.

It localises to the cytoplasm. It carries out the reaction Endonucleolytic cleavage to 5'-phosphomonoester.. Endonuclease that specifically degrades the RNA of RNA-DNA hybrids. This is Ribonuclease HII from Clostridium botulinum (strain ATCC 19397 / Type A).